A 657-amino-acid chain; its full sequence is UvrABC system protein B (657 aa).

The 386-residue stretch at 24–409 folds into the Helicase ATP-binding domain; sequence AGVRNQVKSQ…SGHIVQQIIR (386 aa). 37 to 44 is a binding site for ATP; the sequence is GTTGSGKT. The Beta-hairpin signature appears at 90–113; it reads YYDYYQPEAYIARSDTYIEKSLLI. The Helicase C-terminal domain maps to 426–589; it reads QVDDLLEEIR…IVPKPIIKAI (164 aa). Residues 617–652 form the UVR domain; the sequence is EEQIKKYEALMQRAAKEFRFNEAAKYRDAMQACKEQ.

This sequence belongs to the UvrB family. Forms a heterotetramer with UvrA during the search for lesions. Interacts with UvrC in an incision complex.

It localises to the cytoplasm. Functionally, the UvrABC repair system catalyzes the recognition and processing of DNA lesions. A damage recognition complex composed of 2 UvrA and 2 UvrB subunits scans DNA for abnormalities. Upon binding of the UvrA(2)B(2) complex to a putative damaged site, the DNA wraps around one UvrB monomer. DNA wrap is dependent on ATP binding by UvrB and probably causes local melting of the DNA helix, facilitating insertion of UvrB beta-hairpin between the DNA strands. Then UvrB probes one DNA strand for the presence of a lesion. If a lesion is found the UvrA subunits dissociate and the UvrB-DNA preincision complex is formed. This complex is subsequently bound by UvrC and the second UvrB is released. If no lesion is found, the DNA wraps around the other UvrB subunit that will check the other stand for damage. This chain is UvrABC system protein B, found in Chlamydia pneumoniae (Chlamydophila pneumoniae).